Reading from the N-terminus, the 561-residue chain is MALRTLSTFPSLPRRHTTTRREPNLTVIYRNPTTSIVCKSIANSEPPVSLSERDGFAAAAPTPGERFLENQRAHEAQKVVKKEIKKEKKKKKEEIIARKVVDTSVSCCYGCGAPLQTSDVDSPGFVDLVTYELKKKHHQLRTMICGRCQLLSHGHMITAVGGNGGYPGGKQFVSADELREKLSHLRHEKALIVKLVDIVDFNGSFLARVRDLVGANPIILVITKIDLLPKGTDMNCIGDWVVEVTMRKKLNVLSVHLTSSKSLDGVSGVASEIQKEKKGRDVYILGAANVGKSAFINALLKTMAERDPVAAAAQKYKPIQSAVPGTTLGPIQINAFVGGEKLYDTPGVHLHHRQAAVVHSDDLPALAPQNRLRGQSFDISTLPTQSSSSPKGESLNGYTFFWGGLVRIDILKALPETCFTFYGPKALEIHAVPTKTATAFYEKELGVLLTPPSGKNQMQEWKGLQSHRLLQIEINDAKRPASDVAISGLGWISIEPIRKTRGTEPRDLNEAEHEIHICVSVPKPVEVFLRPTLPIGTSGTEWYQYRELTDKEEEVRPKWYF.

The N-terminal 31 residues, 1–31 (MALRTLSTFPSLPRRHTTTRREPNLTVIYRN), are a transit peptide targeting the chloroplast and mitochondrion. GTP is bound by residues 108–111 (CYGC), 166–174 (YPGGKQFVS), 223–226 (TKID), 260–261 (SK), and 289–294 (NVGKSA). A CP-type G domain is found at 175-351 (ADELREKLSH…LYDTPGVHLH (177 aa)).

This sequence belongs to the TRAFAC class YlqF/YawG GTPase family. NOA1 subfamily. In terms of tissue distribution, expressed in aleurone layer and the embryo.

The protein resides in the mitochondrion. It localises to the plastid. The protein localises to the chloroplast. The catalysed reaction is 2 L-arginine + 3 NADPH + 4 O2 + H(+) = 2 L-citrulline + 2 nitric oxide + 3 NADP(+) + 4 H2O. With respect to regulation, stimulated by calcium/calmodulin. Inhibited by L-NAME. Not activated by tetrahydrobiopterin (BH4), FAD, FMN, or heme. Its function is as follows. Exhibits cGTPase activity; binds and hydrolyzes specifically GTP. May participate in ribosome assembly and stability and thus regulates protein synthesis in chloroplasts. The GTPase activity requires MgCl(2)and the presence of either KCl or (NH(4))(2)SO(4). Involved in the post-transcriptional regulation of the methylerythritol phosphate (MEP) pathway. Involved in chlorophyll-a fluorescence regulation. Functionally, may mediate the production or accumulation of nitric oxide (NO) which is a messenger molecule involved in hormonal signaling and defense responses in plant. Acts as an antisenescence agent. Plays a crucial role in both extracellular calmodulin (ExtCaM)-triggered and salicylic acid (SA)-mediated H(2)O(2)-dependent stomatal closure. In Arabidopsis thaliana (Mouse-ear cress), this protein is NO-associated protein 1, chloroplastic/mitochondrial (NOA1).